We begin with the raw amino-acid sequence, 197 residues long: Large ribosomal subunit protein mL58 (197 aa).

A mitochondrion-targeting transit peptide spans 1 to 20; the sequence is MLFTIKPSFLKPVGFIQTRN.

This sequence belongs to the mitochondrion-specific ribosomal protein mL58 family. As to quaternary structure, component of the mitochondrial large ribosomal subunit (mt-LSU). Mature yeast 74S mitochondrial ribosomes consist of a small (37S) and a large (54S) subunit. The 37S small subunit contains a 15S ribosomal RNA (15S mt-rRNA) and at least 32 different proteins. The 54S large subunit contains a 21S rRNA (21S mt-rRNA) and at least 45 different proteins.

It is found in the mitochondrion. In terms of biological role, component of the mitochondrial ribosome (mitoribosome), a dedicated translation machinery responsible for the synthesis of mitochondrial genome-encoded proteins, including at least some of the essential transmembrane subunits of the mitochondrial respiratory chain. The mitoribosomes are attached to the mitochondrial inner membrane and translation products are cotranslationally integrated into the membrane. This Schizosaccharomyces pombe (strain 972 / ATCC 24843) (Fission yeast) protein is Large ribosomal subunit protein mL58 (mrpl20).